We begin with the raw amino-acid sequence, 389 residues long: Chalcone synthase 2 (389 aa).

Residue C164 is part of the active site.

The protein belongs to the thiolase-like superfamily. Chalcone/stilbene synthases family.

The enzyme catalyses (E)-4-coumaroyl-CoA + 3 malonyl-CoA + 3 H(+) = 2',4,4',6'-tetrahydroxychalcone + 3 CO2 + 4 CoA. It functions in the pathway secondary metabolite biosynthesis; flavonoid biosynthesis. In terms of biological role, the primary product of this enzyme is 4,2',4',6'-tetrahydroxychalcone (also termed naringenin-chalcone or chalcone) which can under specific conditions spontaneously isomerize into naringenin. The sequence is that of Chalcone synthase 2 (CHS2) from Pisum sativum (Garden pea).